A 106-amino-acid chain; its full sequence is Large ribosomal subunit protein bL21 (106 aa).

It belongs to the bacterial ribosomal protein bL21 family. As to quaternary structure, part of the 50S ribosomal subunit. Contacts protein L20.

Functionally, this protein binds to 23S rRNA in the presence of protein L20. The polypeptide is Large ribosomal subunit protein bL21 (Chlamydia felis (strain Fe/C-56) (Chlamydophila felis)).